The chain runs to 315 residues: Porphobilinogen deaminase (315 aa).

Cys-245 is subject to S-(dipyrrolylmethanemethyl)cysteine.

This sequence belongs to the HMBS family. Monomer. It depends on dipyrromethane as a cofactor.

It carries out the reaction 4 porphobilinogen + H2O = hydroxymethylbilane + 4 NH4(+). It participates in porphyrin-containing compound metabolism; protoporphyrin-IX biosynthesis; coproporphyrinogen-III from 5-aminolevulinate: step 2/4. The protein operates within porphyrin-containing compound metabolism; chlorophyll biosynthesis. In terms of biological role, tetrapolymerization of the monopyrrole PBG into the hydroxymethylbilane pre-uroporphyrinogen in several discrete steps. This chain is Porphobilinogen deaminase, found in Prochlorococcus marinus (strain NATL2A).